The chain runs to 117 residues: MSNIIKALEEEQMKSDLPKFAPGDTVVVQVKVKEGDRERLQAFEGVVIAIRNRGLHSAFTVRKISNGEGVERTFQTHSPIVDSIEVKRRGAVRRAKLYYLRERSGKSARIKEKLAKK.

The protein belongs to the bacterial ribosomal protein bL19 family.

In terms of biological role, this protein is located at the 30S-50S ribosomal subunit interface and may play a role in the structure and function of the aminoacyl-tRNA binding site. This is Large ribosomal subunit protein bL19 from Vibrio campbellii (strain ATCC BAA-1116).